Consider the following 78-residue polypeptide: Small integral membrane protein 10-like protein 2A (78 aa).

This Homo sapiens (Human) protein is Small integral membrane protein 10-like protein 2A.